Here is a 355-residue protein sequence, read N- to C-terminus: Holliday junction branch migration complex subunit RuvB (355 aa).

Positions T4 to Y190 are large ATPase domain (RuvB-L). ATP is bound by residues L29, R30, G71, K74, T75, T76, E137–Y139, R180, Y190, and R227. T75 serves as a coordination point for Mg(2+). Residues N191–D261 are small ATPAse domain (RuvB-S). Residues A264–T355 are head domain (RuvB-H). R300, R319, and R324 together coordinate DNA.

The protein belongs to the RuvB family. Homohexamer. Forms an RuvA(8)-RuvB(12)-Holliday junction (HJ) complex. HJ DNA is sandwiched between 2 RuvA tetramers; dsDNA enters through RuvA and exits via RuvB. An RuvB hexamer assembles on each DNA strand where it exits the tetramer. Each RuvB hexamer is contacted by two RuvA subunits (via domain III) on 2 adjacent RuvB subunits; this complex drives branch migration. In the full resolvosome a probable DNA-RuvA(4)-RuvB(12)-RuvC(2) complex forms which resolves the HJ.

The protein resides in the cytoplasm. It catalyses the reaction ATP + H2O = ADP + phosphate + H(+). Functionally, the RuvA-RuvB-RuvC complex processes Holliday junction (HJ) DNA during genetic recombination and DNA repair, while the RuvA-RuvB complex plays an important role in the rescue of blocked DNA replication forks via replication fork reversal (RFR). RuvA specifically binds to HJ cruciform DNA, conferring on it an open structure. The RuvB hexamer acts as an ATP-dependent pump, pulling dsDNA into and through the RuvAB complex. RuvB forms 2 homohexamers on either side of HJ DNA bound by 1 or 2 RuvA tetramers; 4 subunits per hexamer contact DNA at a time. Coordinated motions by a converter formed by DNA-disengaged RuvB subunits stimulates ATP hydrolysis and nucleotide exchange. Immobilization of the converter enables RuvB to convert the ATP-contained energy into a lever motion, pulling 2 nucleotides of DNA out of the RuvA tetramer per ATP hydrolyzed, thus driving DNA branch migration. The RuvB motors rotate together with the DNA substrate, which together with the progressing nucleotide cycle form the mechanistic basis for DNA recombination by continuous HJ branch migration. Branch migration allows RuvC to scan DNA until it finds its consensus sequence, where it cleaves and resolves cruciform DNA. In Paraburkholderia xenovorans (strain LB400), this protein is Holliday junction branch migration complex subunit RuvB.